Consider the following 295-residue polypeptide: Indole-3-glycerol phosphate synthase (295 aa).

Belongs to the TrpC family.

The enzyme catalyses 1-(2-carboxyphenylamino)-1-deoxy-D-ribulose 5-phosphate + H(+) = (1S,2R)-1-C-(indol-3-yl)glycerol 3-phosphate + CO2 + H2O. It participates in amino-acid biosynthesis; L-tryptophan biosynthesis; L-tryptophan from chorismate: step 4/5. This chain is Indole-3-glycerol phosphate synthase, found in Prochlorococcus marinus (strain AS9601).